Consider the following 669-residue polypeptide: Acetolactate synthase, mitochondrial (669 aa).

The N-terminal 140 residues, 1–140, are a transit peptide targeting the mitochondrion; that stretch reads MTVLAPLRRL…PRHEQAAGHA (140 aa). Glu-134 is a thiamine diphosphate binding site. Residues Arg-236, 351 to 372, and 403 to 422 contribute to the FAD site; these read HGSG…LGVR and DISP…IEGD. Positions 497 to 577 are thiamine pyrophosphate binding; that stretch reads AHQMWAATFY…VKILILNNEE (81 aa). Positions 548 and 575 each coordinate Mg(2+).

Belongs to the TPP enzyme family. Mg(2+) is required as a cofactor. Requires thiamine diphosphate as cofactor.

Its subcellular location is the mitochondrion. The enzyme catalyses 2 pyruvate + H(+) = (2S)-2-acetolactate + CO2. It functions in the pathway amino-acid biosynthesis; L-isoleucine biosynthesis; L-isoleucine from 2-oxobutanoate: step 1/4. It participates in amino-acid biosynthesis; L-valine biosynthesis; L-valine from pyruvate: step 1/4. This chain is Acetolactate synthase, mitochondrial (ilv1), found in Schizosaccharomyces pombe (strain 972 / ATCC 24843) (Fission yeast).